We begin with the raw amino-acid sequence, 149 residues long: 3-dehydroquinate dehydratase (149 aa).

Catalysis depends on Y26, which acts as the Proton acceptor. Residues N77, H83, and D90 each coordinate substrate. The Proton donor role is filled by H103. Substrate-binding positions include L104–S105 and R114.

The protein belongs to the type-II 3-dehydroquinase family. As to quaternary structure, homododecamer.

It carries out the reaction 3-dehydroquinate = 3-dehydroshikimate + H2O. It functions in the pathway metabolic intermediate biosynthesis; chorismate biosynthesis; chorismate from D-erythrose 4-phosphate and phosphoenolpyruvate: step 3/7. Functionally, catalyzes a trans-dehydration via an enolate intermediate. The polypeptide is 3-dehydroquinate dehydratase (Aliivibrio salmonicida (strain LFI1238) (Vibrio salmonicida (strain LFI1238))).